Reading from the N-terminus, the 104-residue chain is Succinate dehydrogenase assembly factor 4, mitochondrial (104 aa).

A mitochondrion-targeting transit peptide spans 1–30 (MVSTTLSVSRMTFVWRAARPSLLNHSLRKM). The interval 29–104 (KMSYQEGKPE…WERKGRCIDF (76 aa)) is disordered. Basic and acidic residues-rich tracts occupy residues 63–83 (EREP…EKGG) and 91–104 (RYGD…CIDF).

It belongs to the SDHAF4 family. Interacts with Sdha in its FAD-bound form.

It localises to the mitochondrion matrix. Plays an essential role in the assembly of succinate dehydrogenase (SDH), an enzyme complex (also referred to as respiratory complex II) that is a component of both the tricarboxylic acid (TCA) cycle and the mitochondrial electron transport chain, and which couples the oxidation of succinate to fumarate with the reduction of ubiquinone (coenzyme Q) to ubiquinol. Binds to the flavoprotein subunit Sdha in its FAD-bound form, blocking the generation of excess reactive oxygen species (ROS) and facilitating its assembly with the iron-sulfur protein subunit Sdhb into the SDH catalytic dimer. The protein is Succinate dehydrogenase assembly factor 4, mitochondrial of Mus musculus (Mouse).